The sequence spans 459 residues: Sulfide:quinone oxidoreductase, mitochondrial (459 aa).

A mitochondrion-targeting transit peptide spans 1–24; that stretch reads MLTLNSTIKSVTGSFQSASMLARF. 35 to 39 contributes to the FAD binding site; that stretch reads GGGSA. Active-site cysteine persulfide intermediate residues include Cys-204 and Cys-383.

This sequence belongs to the SQRD family. It depends on FAD as a cofactor.

The protein resides in the mitochondrion. Catalyzes the oxidation of hydrogen sulfide, with the help of a quinone. The protein is Sulfide:quinone oxidoreductase, mitochondrial (hmt2) of Schizosaccharomyces pombe (strain 972 / ATCC 24843) (Fission yeast).